The primary structure comprises 200 residues: NADH-quinone oxidoreductase subunit C (200 aa).

This sequence belongs to the complex I 30 kDa subunit family. NDH-1 is composed of 14 different subunits. Subunits NuoB, C, D, E, F, and G constitute the peripheral sector of the complex.

The protein resides in the cell inner membrane. The enzyme catalyses a quinone + NADH + 5 H(+)(in) = a quinol + NAD(+) + 4 H(+)(out). Functionally, NDH-1 shuttles electrons from NADH, via FMN and iron-sulfur (Fe-S) centers, to quinones in the respiratory chain. The immediate electron acceptor for the enzyme in this species is believed to be ubiquinone. Couples the redox reaction to proton translocation (for every two electrons transferred, four hydrogen ions are translocated across the cytoplasmic membrane), and thus conserves the redox energy in a proton gradient. This Agrobacterium fabrum (strain C58 / ATCC 33970) (Agrobacterium tumefaciens (strain C58)) protein is NADH-quinone oxidoreductase subunit C.